Here is a 429-residue protein sequence, read N- to C-terminus: Histidine--tRNA ligase (429 aa).

It belongs to the class-II aminoacyl-tRNA synthetase family. As to quaternary structure, homodimer.

It localises to the cytoplasm. It catalyses the reaction tRNA(His) + L-histidine + ATP = L-histidyl-tRNA(His) + AMP + diphosphate + H(+). The polypeptide is Histidine--tRNA ligase (Streptococcus pneumoniae serotype 4 (strain ATCC BAA-334 / TIGR4)).